Consider the following 135-residue polypeptide: MNRLQLLSKGLRLIHKMSEEALAGVPLVHISPEGIFKYVMINVFDGGDASKAVIRGFADCTWHADIFEREEEVFKKLGLRAECPGGGRIEHNPEKKYLKVYGYSQGFGKADHAQTKRILATKYPDYTIEISDEGY.

Position 37 (Lys37) interacts with substrate. His63 acts as the Proton acceptor in catalysis. 104-106 (SQG) lines the substrate pocket.

Belongs to the janus family. Somatic and germline cells. Isoform B is expressed in both sexes and in somatic and germ line cells. Isoform A is expressed in males and is germ line specific.

JanA and janB regulate somatic sex differentiation. This Drosophila melanogaster (Fruit fly) protein is Sex-regulated protein janus-A (janA).